The following is a 483-amino-acid chain: Glutamyl-tRNA(Gln) amidotransferase subunit A (483 aa).

Active-site charge relay system residues include Lys-75 and Ser-150. The active-site Acyl-ester intermediate is the Ser-174.

This sequence belongs to the amidase family. GatA subfamily. As to quaternary structure, heterotrimer of A, B and C subunits.

It carries out the reaction L-glutamyl-tRNA(Gln) + L-glutamine + ATP + H2O = L-glutaminyl-tRNA(Gln) + L-glutamate + ADP + phosphate + H(+). Allows the formation of correctly charged Gln-tRNA(Gln) through the transamidation of misacylated Glu-tRNA(Gln) in organisms which lack glutaminyl-tRNA synthetase. The reaction takes place in the presence of glutamine and ATP through an activated gamma-phospho-Glu-tRNA(Gln). The protein is Glutamyl-tRNA(Gln) amidotransferase subunit A of Deinococcus geothermalis (strain DSM 11300 / CIP 105573 / AG-3a).